A 144-amino-acid polypeptide reads, in one-letter code: 3-hydroxyacyl-[acyl-carrier-protein] dehydratase FabZ (144 aa).

H48 is an active-site residue.

This sequence belongs to the thioester dehydratase family. FabZ subfamily.

Its subcellular location is the cytoplasm. It catalyses the reaction a (3R)-hydroxyacyl-[ACP] = a (2E)-enoyl-[ACP] + H2O. Its function is as follows. Involved in unsaturated fatty acids biosynthesis. Catalyzes the dehydration of short chain beta-hydroxyacyl-ACPs and long chain saturated and unsaturated beta-hydroxyacyl-ACPs. In Bacillus cytotoxicus (strain DSM 22905 / CIP 110041 / 391-98 / NVH 391-98), this protein is 3-hydroxyacyl-[acyl-carrier-protein] dehydratase FabZ.